Reading from the N-terminus, the 325-residue chain is Biotin synthase (325 aa).

The 220-residue stretch at 43 to 262 (CSVETAQLLS…VAVARLLMPR (220 aa)) folds into the Radical SAM core domain. Residues C58, C62, and C65 each coordinate [4Fe-4S] cluster. C102, C133, C193, and R266 together coordinate [2Fe-2S] cluster.

It belongs to the radical SAM superfamily. Biotin synthase family. In terms of assembly, homodimer. [4Fe-4S] cluster is required as a cofactor. The cofactor is [2Fe-2S] cluster.

The enzyme catalyses (4R,5S)-dethiobiotin + (sulfur carrier)-SH + 2 reduced [2Fe-2S]-[ferredoxin] + 2 S-adenosyl-L-methionine = (sulfur carrier)-H + biotin + 2 5'-deoxyadenosine + 2 L-methionine + 2 oxidized [2Fe-2S]-[ferredoxin]. Its pathway is cofactor biosynthesis; biotin biosynthesis; biotin from 7,8-diaminononanoate: step 2/2. Its function is as follows. Catalyzes the conversion of dethiobiotin (DTB) to biotin by the insertion of a sulfur atom into dethiobiotin via a radical-based mechanism. The protein is Biotin synthase of Azorhizobium caulinodans (strain ATCC 43989 / DSM 5975 / JCM 20966 / LMG 6465 / NBRC 14845 / NCIMB 13405 / ORS 571).